Consider the following 190-residue polypeptide: UPF0232 protein SCO3875 (190 aa).

2 disordered regions span residues 1–70 (MSAD…GRDP) and 163–190 (GPGG…DTYG). Over residues 26 to 35 (GVDLARVALR) the composition is skewed to low complexity. Basic and acidic residues predominate over residues 36–45 (AAREAARARG). Over residues 163–172 (GPGGPGGPGR) the composition is skewed to gly residues.

The protein belongs to the UPF0232 family.

The polypeptide is UPF0232 protein SCO3875 (Streptomyces coelicolor (strain ATCC BAA-471 / A3(2) / M145)).